The chain runs to 417 residues: Serine--tRNA ligase (417 aa).

An L-serine-binding site is contributed by 232 to 234 (TAE). ATP is bound by residues 263 to 265 (RRE) and Val279. Position 286 (Glu286) interacts with L-serine. 350 to 353 (EISS) contributes to the ATP binding site. Residue Ser385 coordinates L-serine.

It belongs to the class-II aminoacyl-tRNA synthetase family. Type-1 seryl-tRNA synthetase subfamily. As to quaternary structure, homodimer. The tRNA molecule binds across the dimer.

It is found in the cytoplasm. The catalysed reaction is tRNA(Ser) + L-serine + ATP = L-seryl-tRNA(Ser) + AMP + diphosphate + H(+). The enzyme catalyses tRNA(Sec) + L-serine + ATP = L-seryl-tRNA(Sec) + AMP + diphosphate + H(+). It participates in aminoacyl-tRNA biosynthesis; selenocysteinyl-tRNA(Sec) biosynthesis; L-seryl-tRNA(Sec) from L-serine and tRNA(Sec): step 1/1. Functionally, catalyzes the attachment of serine to tRNA(Ser). Is also able to aminoacylate tRNA(Sec) with serine, to form the misacylated tRNA L-seryl-tRNA(Sec), which will be further converted into selenocysteinyl-tRNA(Sec). The protein is Serine--tRNA ligase of Leptospira interrogans serogroup Icterohaemorrhagiae serovar copenhageni (strain Fiocruz L1-130).